The following is a 353-amino-acid chain: Photosystem II D2 protein (353 aa).

At threonine 2 the chain carries N-acetylthreonine. Phosphothreonine is present on threonine 2. Residues 41-61 (CAYFALGGWFTGTTFVTSWYT) traverse the membrane as a helical segment. Histidine 118 lines the chlorophyll a pocket. Residues 125–141 (GFMLRQFELARSVQLRP) traverse the membrane as a helical segment. Residues glutamine 130 and asparagine 143 each contribute to the pheophytin a site. A helical transmembrane segment spans residues 153–166 (VFVSVFLIYPLGQS). Histidine 198 contributes to the chlorophyll a binding site. Residues 208 to 228 (AALLCAIHGATVENTLFEDGD) traverse the membrane as a helical segment. Positions 215 and 262 each coordinate a plastoquinone. Position 215 (histidine 215) interacts with Fe cation. Histidine 269 contacts Fe cation. The chain crosses the membrane as a helical span at residues 279–295 (GLWMSALGVVGLALNLR).

The protein belongs to the reaction center PufL/M/PsbA/D family. In terms of assembly, PSII is composed of 1 copy each of membrane proteins PsbA, PsbB, PsbC, PsbD, PsbE, PsbF, PsbH, PsbI, PsbJ, PsbK, PsbL, PsbM, PsbT, PsbX, PsbY, PsbZ, Psb30/Ycf12, at least 3 peripheral proteins of the oxygen-evolving complex and a large number of cofactors. It forms dimeric complexes. The D1/D2 heterodimer binds P680, chlorophylls that are the primary electron donor of PSII, and subsequent electron acceptors. It shares a non-heme iron and each subunit binds pheophytin, quinone, additional chlorophylls, carotenoids and lipids. There is also a Cl(-1) ion associated with D1 and D2, which is required for oxygen evolution. The PSII complex binds additional chlorophylls, carotenoids and specific lipids. is required as a cofactor.

The protein localises to the plastid. The protein resides in the chloroplast thylakoid membrane. It carries out the reaction 2 a plastoquinone + 4 hnu + 2 H2O = 2 a plastoquinol + O2. Its function is as follows. Photosystem II (PSII) is a light-driven water:plastoquinone oxidoreductase that uses light energy to abstract electrons from H(2)O, generating O(2) and a proton gradient subsequently used for ATP formation. It consists of a core antenna complex that captures photons, and an electron transfer chain that converts photonic excitation into a charge separation. The D1/D2 (PsbA/PsbD) reaction center heterodimer binds P680, the primary electron donor of PSII as well as several subsequent electron acceptors. D2 is needed for assembly of a stable PSII complex. The chain is Photosystem II D2 protein from Ranunculus macranthus (Large buttercup).